Consider the following 363-residue polypeptide: Pyrimidine monooxygenase RutA (363 aa).

FMN contacts are provided by residues 49-50 (IK), Asn115, Glu124, 140-141 (RY), and Ser190.

This sequence belongs to the NtaA/SnaA/DszA monooxygenase family. RutA subfamily.

It carries out the reaction uracil + FMNH2 + NADH + O2 = (Z)-3-ureidoacrylate + FMN + NAD(+) + H2O + H(+). The catalysed reaction is thymine + FMNH2 + NADH + O2 = (Z)-2-methylureidoacrylate + FMN + NAD(+) + H2O + H(+). Catalyzes the pyrimidine ring opening between N-3 and C-4 by an unusual flavin hydroperoxide-catalyzed mechanism, adding oxygen atoms in the process to yield ureidoacrylate peracid, that immediately reacts with FMN forming ureidoacrylate and FMN-N(5)-oxide. The FMN-N(5)-oxide reacts spontaneously with NADH to produce FMN. Requires the flavin reductase RutF to regenerate FMN in vivo. This chain is Pyrimidine monooxygenase RutA, found in Klebsiella pneumoniae (strain 342).